The primary structure comprises 216 residues: LexA repressor (216 aa).

The H-T-H motif DNA-binding region spans 29–49 (RAEIAQALGFRSPNAAEDHLK). Active-site for autocatalytic cleavage activity residues include Ser134 and Lys171.

Belongs to the peptidase S24 family. Homodimer.

The catalysed reaction is Hydrolysis of Ala-|-Gly bond in repressor LexA.. Represses a number of genes involved in the response to DNA damage (SOS response), including recA and lexA. In the presence of single-stranded DNA, RecA interacts with LexA causing an autocatalytic cleavage which disrupts the DNA-binding part of LexA, leading to derepression of the SOS regulon and eventually DNA repair. The polypeptide is LexA repressor (Bordetella bronchiseptica (strain ATCC BAA-588 / NCTC 13252 / RB50) (Alcaligenes bronchisepticus)).